Reading from the N-terminus, the 599-residue chain is Kinesin light chain 2 (599 aa).

A coiled-coil region spans residues 78–143 (ILALSSHLGA…KQHLLFMSQI (66 aa)). The span at 154–163 (EKGDVPKDSL) shows a compositional bias: basic and acidic residues. A disordered region spans residues 154 to 188 (EKGDVPKDSLDDLFPNEDEQSPAPSPGGGDVAAQH). 2 positions are modified to phosphoserine: Ser-174 and Ser-178. TPR repeat units lie at residues 197 to 230 (LRTL…LEKT), 239 to 272 (ATML…REKT), 281 to 314 (AATL…REKV), 323 to 356 (AKQL…YATR), and 365 to 398 (AKTK…AHEK). Ser-443 is subject to Phosphoserine. Residues 447–480 (NTTLRTLGALYRPEGKLEAAHTLEDCASRSRKQG) form a TPR 6 repeat. The interval 492–541 (LLKDGSGRGHRRGSRDVAGPQSESDLEESGPAAEWSGDGSGSLRRSGSFG) is disordered. Residues Ser-505 and Ser-515 each carry the phosphoserine modification. Positions 532 to 541 (GSLRRSGSFG) are enriched in low complexity. Residues Ser-574, Ser-575, and Ser-582 each carry the phosphoserine modification.

It belongs to the kinesin light chain family. In terms of assembly, oligomeric complex composed of two heavy chains and two light chains. Interacts (via TPR repeats) with PLEKHM2.

It is found in the cytoplasm. Its subcellular location is the cytoskeleton. The protein localises to the lysosome membrane. In terms of biological role, kinesin is a microtubule-associated force-producing protein that plays a role in organelle transport. The light chain functions in coupling of cargo to the heavy chain or in the modulation of its ATPase activity. Through binding with PLEKHM2 and ARL8B, recruits kinesin-1 to lysosomes and hence direct lysosomes movement toward microtubule plus ends. This chain is Kinesin light chain 2, found in Mus musculus (Mouse).